The primary structure comprises 624 residues: Basal cell adhesion molecule (624 aa).

A signal peptide spans 1–25; that stretch reads MEPPDARAGLLWLTLLLSGYSGAQA. Ig-like V-type domains lie at 26–136 and 141–251; these read ELHV…SSVR and PEAT…HTFR. Residues 26 to 543 are Extracellular-facing; it reads ELHVSVPPRV…GSVAPQTAQA (518 aa). 3 disulfides stabilise this stretch: C47/C119, C166/C231, and C285/C331. 3 consecutive Ig-like C2-type domains span residues 268-343, 357-436, and 443-534; these read PSTT…EEVQ, PLEL…QSFQ, and PELK…FHFG. 3 N-linked (GlcNAc...) asparagine glycosylation sites follow: N315, N371, and N378. 2 cysteine pairs are disulfide-bonded: C379–C419 and C468–C518. The interval 477–497 is disordered; the sequence is KLTWSQRGDTTPAEPPFEGRG. Residues 544–564 traverse the membrane as a helical segment; sequence GVAVMAVAVSVGLLLLVVAAF. Topologically, residues 565–624 are cytoplasmic; sequence YCMRRKGRPGCCQRAEKGAPPAREPELSHSGSERPEHTGLLMGGPSGGGRGGNGGFGDEC. Residues 574 to 624 form a disordered region; it reads GCCQRAEKGAPPAREPELSHSGSERPEHTGLLMGGPSGGGRGGNGGFGDEC. Basic and acidic residues predominate over residues 587–601; the sequence is REPELSHSGSERPEH. A phosphoserine mark is found at S592, S594, and S596. The span at 605-624 shows a compositional bias: gly residues; it reads LMGGPSGGGRGGNGGFGDEC.

Homodimer. Interacts with ITGA4:ITGB1. Interacts with spectrins SPTA1 and SPTB1.

Its subcellular location is the cell membrane. Functionally, transmembrane glycoprotein that functions as both a receptor and an adhesion molecule playing a crucial role in cell adhesion, motility, migration and invasion. Extracellular domain enables binding to extracellular matrix proteins, such as laminin, integrin and other ligands while its intracellular domain interacts with cytoskeletal proteins like hemoglobin, facilitating cell signal transduction. Serves as a receptor for laminin alpha-5/LAMA5 to promote cell adhesion. Mechanistically, JAK2 induces BCAM phosphorylation and activates its adhesion to laminin by stimulating a Rap1/AKT signaling pathway in the absence of EPOR. In Rattus norvegicus (Rat), this protein is Basal cell adhesion molecule (Bcam).